We begin with the raw amino-acid sequence, 103 residues long: Large ribosomal subunit protein bL21 (103 aa).

Belongs to the bacterial ribosomal protein bL21 family. As to quaternary structure, part of the 50S ribosomal subunit. Contacts protein L20.

In terms of biological role, this protein binds to 23S rRNA in the presence of protein L20. This is Large ribosomal subunit protein bL21 from Shewanella sediminis (strain HAW-EB3).